The sequence spans 130 residues: Peptide methionine sulfoxide reductase MsrB (130 aa).

The MsrB domain maps to 1 to 122; the sequence is MKKREDMTEM…NSVSMAFEDS (122 aa). Zn(2+) is bound by residues C39, C42, C88, and C91. C111 serves as the catalytic Nucleophile.

This sequence belongs to the MsrB Met sulfoxide reductase family. Zn(2+) is required as a cofactor.

The enzyme catalyses L-methionyl-[protein] + [thioredoxin]-disulfide + H2O = L-methionyl-(R)-S-oxide-[protein] + [thioredoxin]-dithiol. This is Peptide methionine sulfoxide reductase MsrB from Pasteurella multocida (strain Pm70).